A 404-amino-acid polypeptide reads, in one-letter code: Subtilisin-like proteinase Mp1 (404 aa).

The N-terminal stretch at 1–19 (MVGFKTLALHLAAVLPALA) is a signal peptide. Positions 20-112 (APVDKQATQV…VEPDQVWDLY (93 aa)) are excised as a propeptide. Residues 33–111 (SYIITLKQGA…FVEPDQVWDL (79 aa)) enclose the Inhibitor I9 domain. One can recognise a Peptidase S8 domain in the interval 121 to 404 (PWGLGSISHR…NLIAFNGVTA (284 aa)). N133 carries N-linked (GlcNAc...) asparagine glycosylation. Active-site charge relay system residues include D154, H186, and S347.

It belongs to the peptidase S8 family.

Its subcellular location is the secreted. This chain is Subtilisin-like proteinase Mp1, found in Magnaporthiopsis poae (Kentucky bluegrass fungus).